A 644-amino-acid polypeptide reads, in one-letter code: Protein cueball (644 aa).

The signal sequence occupies residues M1 to G26. Residues T27–S531 are Extracellular-facing. 2 N-linked (GlcNAc...) asparagine glycosylation sites follow: N82 and N108. LDL-receptor class B repeat units lie at residues T121–R166, R167–S211, and D212–A257. 2 N-linked (GlcNAc...) asparagine glycosylation sites follow: N175 and N190. N313 carries N-linked (GlcNAc...) asparagine glycosylation. 2 consecutive EGF-like domains span residues E398–E430 and E433–E471. Cystine bridges form between C402–C411, C406–C421, C437–C447, C441–C459, and C461–C470. 2 N-linked (GlcNAc...) asparagine glycosylation sites follow: N473 and N508. A helical membrane pass occupies residues S532–V552. Residues H553–Y644 lie on the Cytoplasmic side of the membrane.

It belongs to the cueball family.

The protein localises to the cell membrane. Has a role in spermatogenesis and oogenesis. The polypeptide is Protein cueball (Drosophila yakuba (Fruit fly)).